A 264-amino-acid polypeptide reads, in one-letter code: uncharacterized protein (264 aa).

6 helical membrane passes run 23 to 43 (LIFL…TALI), 59 to 79 (FDTF…YYFL), 91 to 111 (LVLS…FYAL), 150 to 170 (FSEL…VGLL), 190 to 210 (AGIY…LNVW), and 233 to 253 (WIWS…LFVI).

The protein localises to the cell membrane. This is an uncharacterized protein from Mycoplasma genitalium (strain ATCC 33530 / DSM 19775 / NCTC 10195 / G37) (Mycoplasmoides genitalium).